The following is a 139-amino-acid chain: Large ribosomal subunit protein uL22 (139 aa).

The disordered stretch occupies residues 118–139 (VEVESRPKKVASKSKSQKGSAR). The segment covering 125-139 (KKVASKSKSQKGSAR) has biased composition (basic residues).

It belongs to the universal ribosomal protein uL22 family. As to quaternary structure, part of the 50S ribosomal subunit.

Its function is as follows. This protein binds specifically to 23S rRNA; its binding is stimulated by other ribosomal proteins, e.g. L4, L17, and L20. It is important during the early stages of 50S assembly. It makes multiple contacts with different domains of the 23S rRNA in the assembled 50S subunit and ribosome. In terms of biological role, the globular domain of the protein is located near the polypeptide exit tunnel on the outside of the subunit, while an extended beta-hairpin is found that lines the wall of the exit tunnel in the center of the 70S ribosome. The sequence is that of Large ribosomal subunit protein uL22 from Saccharopolyspora erythraea (strain ATCC 11635 / DSM 40517 / JCM 4748 / NBRC 13426 / NCIMB 8594 / NRRL 2338).